The primary structure comprises 626 residues: Chaperone protein HtpG (626 aa).

The segment at 1-339 (MSQNQETRGF…SNDLPLNVSR (339 aa)) is a; substrate-binding. Residues 340–555 (EILQDNKITA…NDQMTTQMAK (216 aa)) form a b region. The tract at residues 556–626 (LFAAAGQPVP…FIKRINKLLG (71 aa)) is c.

The protein belongs to the heat shock protein 90 family. Homodimer.

Its subcellular location is the cytoplasm. In terms of biological role, molecular chaperone. Has ATPase activity. The chain is Chaperone protein HtpG from Haemophilus influenzae (strain ATCC 51907 / DSM 11121 / KW20 / Rd).